An 89-amino-acid polypeptide reads, in one-letter code: Sugar transporter SemiSWEET (89 aa).

The next 3 membrane-spanning stretches (helical) occupy residues 4–27, 35–55, and 60–82; these read ILLTGLFAAFFTTFAFAPQSIKTI, ISVVMYIMFLTGVISWIAYGI, and FAVLIANIVTLFLAAPVLVITLI. Residues 7–59 form the PQ-loop domain; sequence TGLFAAFFTTFAFAPQSIKTIRTRNTEGISVVMYIMFLTGVISWIAYGIMRSD.

Homodimer.

The protein localises to the cell membrane. Its function is as follows. The homodimer mediates transmembrane sugar transport down a concentration gradient. Transport is probably effected by rocking-type movements, where a cargo-binding cavity opens first on one and then on the other side of the membrane. This chain is Sugar transporter SemiSWEET, found in Escherichia coli (strain UMEA 3162-1).